The following is a 452-amino-acid chain: Chromosomal replication initiator protein DnaA (452 aa).

Positions 1 to 73 (MSPNSTLWQT…NELATKYSST (73 aa)) are domain I, interacts with DnaA modulators. A domain II region spans residues 73 to 102 (TPVRLKFVSQEEVIEEPVADRKLTIDYRQG). A domain III, AAA+ region region spans residues 103–323 (NLNSTYTFDS…GALIRLISYA (221 aa)). 4 residues coordinate ATP: G147, G149, K150, and T151. The segment at 324-452 (QTFNLEITMN…VKKIDSPLLK (129 aa)) is domain IV, binds dsDNA.

Belongs to the DnaA family. Oligomerizes as a right-handed, spiral filament on DNA at oriC.

Its subcellular location is the cytoplasm. Functionally, plays an essential role in the initiation and regulation of chromosomal replication. ATP-DnaA binds to the origin of replication (oriC) to initiate formation of the DNA replication initiation complex once per cell cycle. Binds the DnaA box (a 9 base pair repeat at the origin) and separates the double-stranded (ds)DNA. Forms a right-handed helical filament on oriC DNA; dsDNA binds to the exterior of the filament while single-stranded (ss)DNA is stabiized in the filament's interior. The ATP-DnaA-oriC complex binds and stabilizes one strand of the AT-rich DNA unwinding element (DUE), permitting loading of DNA polymerase. After initiation quickly degrades to an ADP-DnaA complex that is not apt for DNA replication. Binds acidic phospholipids. This chain is Chromosomal replication initiator protein DnaA, found in Acholeplasma laidlawii (strain PG-8A).